We begin with the raw amino-acid sequence, 687 residues long: Glycine--tRNA ligase beta subunit (687 aa).

Belongs to the class-II aminoacyl-tRNA synthetase family. As to quaternary structure, tetramer of two alpha and two beta subunits.

Its subcellular location is the cytoplasm. It catalyses the reaction tRNA(Gly) + glycine + ATP = glycyl-tRNA(Gly) + AMP + diphosphate. In Ruegeria sp. (strain TM1040) (Silicibacter sp.), this protein is Glycine--tRNA ligase beta subunit.